We begin with the raw amino-acid sequence, 426 residues long: Histone-binding protein RBBP7 (426 aa).

Position 2 is an N-acetylalanine (alanine 2). Serine 3 carries the post-translational modification Phosphoserine. Lysine 4 is modified (N6-acetyllysine; alternate). A Glycyl lysine isopeptide (Lys-Gly) (interchain with G-Cter in SUMO2); alternate cross-link involves residue lysine 4. Lysine 4 is covalently cross-linked (Glycyl lysine isopeptide (Lys-Gly) (interchain with G-Cter in ubiquitin); alternate). A Phosphothreonine modification is found at threonine 10. WD repeat units follow at residues 47-122 (QWLP…KINH), 128-173 (RARY…LRLR), 181-217 (GLSW…KIVD), 228-269 (VVED…HLVD), 275-312 (VNCL…LHTF), 318-370 (EIFQ…LFIH), and 377-404 (ISDF…IWQM). Serine 95 carries the post-translational modification Phosphoserine. A Glycyl lysine isopeptide (Lys-Gly) (interchain with G-Cter in SUMO2) cross-link involves residue lysine 101. At lysine 119 the chain carries N6-acetyllysine. Residue lysine 155 forms a Glycyl lysine isopeptide (Lys-Gly) (interchain with G-Cter in SUMO2) linkage. Residue lysine 159 is modified to N6-acetyllysine; alternate. Lysine 159 participates in a covalent cross-link: Glycyl lysine isopeptide (Lys-Gly) (interchain with G-Cter in SUMO2); alternate. Serine 355 carries the phosphoserine modification.

The protein belongs to the WD repeat RBAP46/RBAP48/MSI1 family. In terms of assembly, binds directly to helix 1 of the histone fold of histone H4, a region that is not accessible when H4 is in chromatin. Subunit of the type B histone acetyltransferase (HAT) complex, composed of RBBP7 and HAT1. Subunit of the core histone deacetylase (HDAC) complex, which is composed of HDAC1, HDAC2, RBBP4 and RBBP7. The core HDAC complex associates with SIN3A, ARID4B/SAP180, SAP18, SAP30, SAP130, SUDS3/SAP45 and possibly ARID4A/RBP1 and ING1 to form the SIN3 HDAC complex. Component of the nucleosome remodeling and deacetylase (NuRD) repressor complex, composed of core proteins MTA1, MTA2, MTA3, RBBP4, RBBP7, HDAC1, HDAC2, MBD2, MBD3, and peripherally associated proteins CDK2AP1, CDK2AP2, GATAD2A, GATAD2B, CHD3, CHD4 and CHD5. The exact stoichiometry of the NuRD complex is unknown, and some subunits such as MBD2 and MBD3, GATAD2A and GATAD2B, and CHD3, CHD4 and CHD5 define mutually exclusive NuRD complexes. The NuRD complex may interact with MBD3L1. The NuRD complex may interact with MBD3L2. Subunit of the PRC2/EED-EZH2 complex, which is composed of at least EED, EZH2, RBBP4, RBBP7 and SUZ12. The PRC2/EED-EZH2 complex may also associate with HDAC1. Component of the NURF-1 ISWI chromatin remodeling complex (also called the nucleosome-remodeling factor (NURF) complex) at least composed of SMARCA1, BPTF, RBBP4 and RBBP7. Within the complex interacts with SMARCA1. Component of the BPFT-SMARCA1 complex at least composed of SMARCA1, BPFT, RBBP4 and RBBP7; the complex is catalytically inactive and does not remodel chromatin. Within the complex interacts with SMARCA1. Interacts with BRCA1. Interacts with CDK2AP1. Interacts with CENPA. Interacts with CHD3. Interacts with CHD4. Interacts with CREBBP, and this interaction may be enhanced by the binding of phosphorylated CREB1 to CREBBP. Interacts with HDAC7. Interacts with MTA1. Interacts with PWWP2B. Interacts with RB1 (via viral protein-binding domain). Interacts with SUV39H1.

It localises to the nucleus. In terms of biological role, core histone-binding subunit that may target chromatin remodeling factors, histone acetyltransferases and histone deacetylases to their histone substrates in a manner that is regulated by nucleosomal DNA. Component of several complexes which regulate chromatin metabolism. These include the type B histone acetyltransferase (HAT) complex, which is required for chromatin assembly following DNA replication; the core histone deacetylase (HDAC) complex, which promotes histone deacetylation and consequent transcriptional repression; the nucleosome remodeling and histone deacetylase complex (the NuRD complex), which promotes transcriptional repression by histone deacetylation and nucleosome remodeling; and the PRC2/EED-EZH2 complex, which promotes repression of homeotic genes during development; and the NURF (nucleosome remodeling factor) complex. This is Histone-binding protein RBBP7 (RBBP7) from Pongo abelii (Sumatran orangutan).